The sequence spans 64 residues: Large ribosomal subunit protein bL35 (64 aa).

The protein belongs to the bacterial ribosomal protein bL35 family.

The sequence is that of Large ribosomal subunit protein bL35 from Helicobacter hepaticus (strain ATCC 51449 / 3B1).